A 240-amino-acid polypeptide reads, in one-letter code: Pyridoxine 5'-phosphate synthase (240 aa).

Asn-7 is a 3-amino-2-oxopropyl phosphate binding site. 9-10 serves as a coordination point for 1-deoxy-D-xylulose 5-phosphate; sequence DH. Position 18 (Arg-18) interacts with 3-amino-2-oxopropyl phosphate. The active-site Proton acceptor is the His-43. 1-deoxy-D-xylulose 5-phosphate-binding residues include Arg-45 and His-50. Residue Glu-70 is the Proton acceptor of the active site. Thr-100 serves as a coordination point for 1-deoxy-D-xylulose 5-phosphate. His-191 (proton donor) is an active-site residue. 3-amino-2-oxopropyl phosphate contacts are provided by residues Gly-192 and 213–214; that span reads GH.

Belongs to the PNP synthase family. In terms of assembly, homooctamer; tetramer of dimers.

It is found in the cytoplasm. The catalysed reaction is 3-amino-2-oxopropyl phosphate + 1-deoxy-D-xylulose 5-phosphate = pyridoxine 5'-phosphate + phosphate + 2 H2O + H(+). The protein operates within cofactor biosynthesis; pyridoxine 5'-phosphate biosynthesis; pyridoxine 5'-phosphate from D-erythrose 4-phosphate: step 5/5. Catalyzes the complicated ring closure reaction between the two acyclic compounds 1-deoxy-D-xylulose-5-phosphate (DXP) and 3-amino-2-oxopropyl phosphate (1-amino-acetone-3-phosphate or AAP) to form pyridoxine 5'-phosphate (PNP) and inorganic phosphate. In Acaryochloris marina (strain MBIC 11017), this protein is Pyridoxine 5'-phosphate synthase.